The sequence spans 52 residues: ERMES regulator 1 (52 aa).

Over 1–27 (MIFFFNQIRSIFTALHTPTQQIQLSRR) the chain is Mitochondrial intermembrane. A helical transmembrane segment spans residues 28-46 (AFFQFLGYLGSCVVISLAA). Topologically, residues 47–52 (QSKYVQ) are cytoplasmic.

The protein belongs to the EMR1 family.

It is found in the mitochondrion outer membrane. Its function is as follows. Mediates the formation of endoplasmic reticulum (ER)-mitochondria encounter structure (ERMES) foci, thereby contributing to the formation of ER-mitochondrial contact sites. In Saccharomyces cerevisiae (strain ATCC 204508 / S288c) (Baker's yeast), this protein is ERMES regulator 1.